A 351-amino-acid polypeptide reads, in one-letter code: Molybdenum import ATP-binding protein ModC (351 aa).

One can recognise an ABC transporter domain in the interval 1–229; it reads MLEINIHQQL…DILADWQSET (229 aa). Position 31–38 (31–38) interacts with ATP; the sequence is GRSGAGKS. The 62-residue stretch at 290-351 folds into the Mop domain; the sequence is HSSIRNILNG…IYVQIKSVSL (62 aa).

It belongs to the ABC transporter superfamily. Molybdate importer (TC 3.A.1.8) family. In terms of assembly, the complex is composed of two ATP-binding proteins (ModC), two transmembrane proteins (ModB) and a solute-binding protein (ModA).

The protein localises to the cell inner membrane. The enzyme catalyses molybdate(out) + ATP + H2O = molybdate(in) + ADP + phosphate + H(+). In terms of biological role, part of the ABC transporter complex ModABC involved in molybdenum import. Responsible for energy coupling to the transport system. In Haemophilus ducreyi (strain 35000HP / ATCC 700724), this protein is Molybdenum import ATP-binding protein ModC.